The sequence spans 1215 residues: Chromosome segregation protein sudA (1215 aa).

ATP is bound at residue 32 to 39 (GRNGSGKS). Positions 177–522 (KIMHETNSKR…LSQMMDHNTS (346 aa)) form a coiled coil. The interval 313-332 (SDNQAAAQESKARHDESLKA) is disordered. The region spanning 538 to 650 (EGVYGTLAEL…PNLQVASQYA (113 aa)) is the SMC hinge domain. The segment at 654–676 (GVNATTPEGDRSDKRGALTGGFH) is disordered. Residues 684 to 1091 (DAVKNLAKWR…EEAKHSVENY (408 aa)) are a coiled coil.

This sequence belongs to the SMC family. SMC3 subfamily.

Its subcellular location is the nucleus. Its function is as follows. Involved in chromosome segregation in mitosis. This Emericella nidulans (strain FGSC A4 / ATCC 38163 / CBS 112.46 / NRRL 194 / M139) (Aspergillus nidulans) protein is Chromosome segregation protein sudA (sudA).